The primary structure comprises 181 residues: PLAT domain-containing protein 1 (181 aa).

The N-terminal stretch at 1 to 14 is a signal peptide; sequence MARRDVLLPFLLLL. Alanine 15 is subject to N-acetylalanine. Positions 29–156 constitute a PLAT domain; that stretch reads CVYTFYLRTG…SPYELTAVRN (128 aa).

As to expression, expressed in root tips, pericycle cells, lateral root primordia, stomata, leaf vasculature, hydathodes and floral organs.

Its subcellular location is the endoplasmic reticulum. The protein localises to the plastid. It localises to the chloroplast. The protein resides in the plastoglobule. Its function is as follows. Positive regulator of abiotic stress tolerance involved in the regulation of plant growth. May be a downstream target of the abscisic acid (ABA) signaling pathway. The polypeptide is PLAT domain-containing protein 1 (Arabidopsis thaliana (Mouse-ear cress)).